A 274-amino-acid polypeptide reads, in one-letter code: Long chain fatty acid elongase 2 (274 aa).

Transmembrane regions (helical) follow at residues 29 to 49 (MSTFVPLSYKIMIGYLVTIYF), 73 to 93 (FSLFSGIAAYKLIPELFGVFM), 115 to 135 (FWGWAFVMSKAPELGDTMFLV), 140 to 160 (PVIFMHWYHHALTFVYAVVTY), 170 to 190 (SLALNLAVHTVMYFYFAVRAL), 201 to 221 (FITTIQIVQFVISCYIFGHLV), and 238 to 258 (VLSIGGLMYISYLFLFAKFFY).

Belongs to the ELO family. In terms of tissue distribution, expressed in various tissues and parts of the body, including the ventral cord, pharyngeal muscles, uterus, and the tail, and most strongly in intestinal cells.

The protein localises to the membrane. The enzyme catalyses hexadecanoyl-CoA + malonyl-CoA + H(+) = 3-oxooctadecanoyl-CoA + CO2 + CoA. It functions in the pathway lipid metabolism; fatty acid biosynthesis. In terms of biological role, catalyzes the first and rate-limiting reaction of the four reactions that constitute the long-chain fatty acids elongation cycle. Uses malonyl-CoA to add 2 carbons per cycle to the chain of long-chain fatty acids. Condensing enzyme responsible for the elongation of palmitate (hexadecanoate, 16:0), also involved in polyunsaturated fatty acid (PUFA) biosynthesis. The protein is Long chain fatty acid elongase 2 of Caenorhabditis elegans.